The sequence spans 298 residues: N-acetylmuramic acid 6-phosphate etherase (298 aa).

The SIS domain maps to I55–K218. The Proton donor role is filled by E83. Residue E114 is part of the active site.

Belongs to the GCKR-like family. MurNAc-6-P etherase subfamily. As to quaternary structure, homodimer.

The catalysed reaction is N-acetyl-D-muramate 6-phosphate + H2O = N-acetyl-D-glucosamine 6-phosphate + (R)-lactate. Its pathway is amino-sugar metabolism; 1,6-anhydro-N-acetylmuramate degradation. It functions in the pathway amino-sugar metabolism; N-acetylmuramate degradation. The protein operates within cell wall biogenesis; peptidoglycan recycling. Functionally, specifically catalyzes the cleavage of the D-lactyl ether substituent of MurNAc 6-phosphate, producing GlcNAc 6-phosphate and D-lactate. Together with AnmK, is also required for the utilization of anhydro-N-acetylmuramic acid (anhMurNAc) either imported from the medium or derived from its own cell wall murein, and thus plays a role in cell wall recycling. In Escherichia coli O81 (strain ED1a), this protein is N-acetylmuramic acid 6-phosphate etherase.